Reading from the N-terminus, the 331-residue chain is MQKFLSLIIVILILYNIVKLKISPDNNNLTTVEQTASNNSSTDENQTSINNEPPISLNGNLFERTVSKIVINALKTEEGKAFFENILQPLNGPINPNDYTIEVRKDLVKTLFKINTLGSGNIGPASCGHVVTVFYQISDMNNTLISEDTKTFTLGSAPVMLGLDNVIIGMMVGEAREAIIPAKYAVNNSNNIIFDDAYNYKVNVILKSILPQNFVKSNEVKIYDDEIAYRVPLLCGEKVSFNAKITRLSNGKILYDSKAKGQQIDMKIGDITYPLIFSYALQGKVTIGTRSVIAKGKTFKTLGSNINKIISHESLPTNEYLLLELGDFKQN.

Residues 33-54 form a disordered region; sequence EQTASNNSSTDENQTSINNEPP. Residues 128 to 226 enclose the PPIase FKBP-type domain; it reads GHVVTVFYQI…SNEVKIYDDE (99 aa).

The catalysed reaction is [protein]-peptidylproline (omega=180) = [protein]-peptidylproline (omega=0). The protein is Putative peptidyl-prolyl cis-trans isomerase RC0542 of Rickettsia conorii (strain ATCC VR-613 / Malish 7).